Consider the following 141-residue polypeptide: Large ribosomal subunit protein uL11 (141 aa).

This sequence belongs to the universal ribosomal protein uL11 family. In terms of assembly, part of the ribosomal stalk of the 50S ribosomal subunit. Interacts with L10 and the large rRNA to form the base of the stalk. L10 forms an elongated spine to which L12 dimers bind in a sequential fashion forming a multimeric L10(L12)X complex. One or more lysine residues are methylated.

Functionally, forms part of the ribosomal stalk which helps the ribosome interact with GTP-bound translation factors. This Streptococcus mutans serotype c (strain ATCC 700610 / UA159) protein is Large ribosomal subunit protein uL11.